We begin with the raw amino-acid sequence, 150 residues long: Macrodomain Ter protein (150 aa).

This sequence belongs to the MatP family. As to quaternary structure, homodimer.

It is found in the cytoplasm. In terms of biological role, required for spatial organization of the terminus region of the chromosome (Ter macrodomain) during the cell cycle. Prevents early segregation of duplicated Ter macrodomains during cell division. Binds specifically to matS, which is a 13 bp signature motif repeated within the Ter macrodomain. This is Macrodomain Ter protein from Escherichia coli O6:K15:H31 (strain 536 / UPEC).